Here is a 253-residue protein sequence, read N- to C-terminus: Ribosome-inactivating protein saporin-5 (253 aa).

Residue Glu176 is part of the active site.

It belongs to the ribosome-inactivating protein family. Type 1 RIP subfamily.

It catalyses the reaction Endohydrolysis of the N-glycosidic bond at one specific adenosine on the 28S rRNA.. Functionally, ribosome-inactivating protein of type 1, inhibits protein synthesis in animal cells. This is Ribosome-inactivating protein saporin-5 (SAP5) from Saponaria officinalis (Common soapwort).